The sequence spans 66 residues: Large ribosomal subunit protein bL33c (66 aa).

The protein belongs to the bacterial ribosomal protein bL33 family.

The protein resides in the plastid. Its subcellular location is the chloroplast. The sequence is that of Large ribosomal subunit protein bL33c from Cycas taitungensis (Prince sago).